The following is a 105-amino-acid chain: Replication restart protein PriB (105 aa).

The region spanning 1 to 102 (MTANRLVLTG…LHAEQIELID (102 aa)) is the SSB domain.

Belongs to the PriB family. Homodimer. Interacts with PriA and DnaT. Component of the replication restart primosome. Primosome assembly occurs via a 'hand-off' mechanism. PriA binds to replication forks, subsequently PriB then DnaT bind; DnaT then displaces ssDNA to generate the helicase loading substrate.

Its function is as follows. Involved in the restart of stalled replication forks, which reloads the replicative helicase on sites other than the origin of replication; the PriA-PriB pathway is the major replication restart pathway. During primosome assembly it facilitates complex formation between PriA and DnaT on DNA; stabilizes PriA on DNA. Stimulates the DNA unwinding activity of PriA helicase. The polypeptide is Replication restart protein PriB (Proteus mirabilis (strain HI4320)).